The sequence spans 102 residues: Co-chaperonin GroES (102 aa).

It belongs to the GroES chaperonin family. Heptamer of 7 subunits arranged in a ring. Interacts with the chaperonin GroEL.

The protein localises to the cytoplasm. Together with the chaperonin GroEL, plays an essential role in assisting protein folding. The GroEL-GroES system forms a nano-cage that allows encapsulation of the non-native substrate proteins and provides a physical environment optimized to promote and accelerate protein folding. GroES binds to the apical surface of the GroEL ring, thereby capping the opening of the GroEL channel. The chain is Co-chaperonin GroES from Chlamydia trachomatis serovar D (strain ATCC VR-885 / DSM 19411 / UW-3/Cx).